We begin with the raw amino-acid sequence, 62 residues long: Large ribosomal subunit protein uL29 (62 aa).

It belongs to the universal ribosomal protein uL29 family.

The chain is Large ribosomal subunit protein uL29 from Helicobacter hepaticus (strain ATCC 51449 / 3B1).